Reading from the N-terminus, the 122-residue chain is Large ribosomal subunit protein uL14 (122 aa).

Belongs to the universal ribosomal protein uL14 family. In terms of assembly, part of the 50S ribosomal subunit. Forms a cluster with proteins L3 and L19. In the 70S ribosome, L14 and L19 interact and together make contacts with the 16S rRNA in bridges B5 and B8.

Binds to 23S rRNA. Forms part of two intersubunit bridges in the 70S ribosome. This Nostoc punctiforme (strain ATCC 29133 / PCC 73102) protein is Large ribosomal subunit protein uL14.